A 77-amino-acid polypeptide reads, in one-letter code: Delta-conotoxin GmVIA (77 aa).

Residues M1–A22 form the signal peptide. Residues D23 to R48 constitute a propeptide that is removed on maturation. Disulfide bonds link C52–C67, C59–C72, and C66–C76.

Belongs to the conotoxin O1 superfamily. As to expression, expressed by the venom duct.

It is found in the secreted. Delta-conotoxins bind to site 6 of voltage-gated sodium channels (Nav) and inhibit the inactivation process. This toxin shows weak activity on rNav1.2/SCN2A (EC(50)=2.5 uM) and rNav1.4/SCN4A (EC(50)=4.8 uM). In vivo, injection of this peptide in the head region of garden snail induces retraction of the head and body into shell. This is followed by secretion of viscous green slime and a convulsive undulation into and out of the shell. No apparent biological activity was observed when a much greater dose of peptide was injected intraperitoneally into mice. In Conus gloriamaris (Glory-of-the-Sea cone), this protein is Delta-conotoxin GmVIA.